Reading from the N-terminus, the 345-residue chain is Phosphoribosylformylglycinamidine cyclo-ligase (345 aa).

Belongs to the AIR synthase family.

It is found in the cytoplasm. It carries out the reaction 2-formamido-N(1)-(5-O-phospho-beta-D-ribosyl)acetamidine + ATP = 5-amino-1-(5-phospho-beta-D-ribosyl)imidazole + ADP + phosphate + H(+). It participates in purine metabolism; IMP biosynthesis via de novo pathway; 5-amino-1-(5-phospho-D-ribosyl)imidazole from N(2)-formyl-N(1)-(5-phospho-D-ribosyl)glycinamide: step 2/2. In Pectobacterium atrosepticum (strain SCRI 1043 / ATCC BAA-672) (Erwinia carotovora subsp. atroseptica), this protein is Phosphoribosylformylglycinamidine cyclo-ligase.